The sequence spans 286 residues: uncharacterized protein (286 aa).

Residues 8 to 28 (PLSGFISSLIWWLLFFYLIMA) traverse the membrane as a helical segment.

It to M.jannaschii MJ1495.

The protein localises to the membrane. This is an uncharacterized protein from Methanocaldococcus jannaschii (strain ATCC 43067 / DSM 2661 / JAL-1 / JCM 10045 / NBRC 100440) (Methanococcus jannaschii).